The chain runs to 221 residues: Large ribosomal subunit protein uL3 (221 aa).

The interval His131–Gly165 is disordered.

This sequence belongs to the universal ribosomal protein uL3 family. Part of the 50S ribosomal subunit. Forms a cluster with proteins L14 and L19.

In terms of biological role, one of the primary rRNA binding proteins, it binds directly near the 3'-end of the 23S rRNA, where it nucleates assembly of the 50S subunit. This chain is Large ribosomal subunit protein uL3, found in Phytoplasma australiense.